The chain runs to 486 residues: Serine/threonine-protein kinase 33 (486 aa).

The tract at residues 39–100 is disordered; it reads VVEMSQTSST…WGRGNFTEGK (62 aa). Residues 41–53 are compositionally biased toward polar residues; that stretch reads EMSQTSSTGSSEF. Positions 57–66 are enriched in basic and acidic residues; that stretch reads PEKRKEKGAS. The segment covering 68-80 has biased composition (polar residues); the sequence is DVTSGKDSPSKSS. Residues 116–381 form the Protein kinase domain; that stretch reads YTFGRILGQG…AKELLDNQWL (266 aa). Residues 122–130 and K145 contribute to the ATP site; that span reads LGQGSFGMV. Catalysis depends on D238, which acts as the Proton acceptor. The interval 402–451 is disordered; it reads KNNPESDEESTTDQRDSRSGQEESKVYQPSRNVPDVSNSSDEEEGKQVGR. S407 is modified (phosphoserine). Residues 413 to 426 are compositionally biased toward basic and acidic residues; sequence TDQRDSRSGQEESK. The span at 428-440 shows a compositional bias: polar residues; that stretch reads YQPSRNVPDVSNS.

The protein belongs to the protein kinase superfamily. CAMK Ser/Thr protein kinase family. CaMK subfamily. Interacts with vimentin/VIM. Post-translationally, autophosphorylated.

Its subcellular location is the cytoplasm. It localises to the perinuclear region. The catalysed reaction is L-seryl-[protein] + ATP = O-phospho-L-seryl-[protein] + ADP + H(+). It carries out the reaction L-threonyl-[protein] + ATP = O-phospho-L-threonyl-[protein] + ADP + H(+). Its function is as follows. Serine/threonine protein kinase which phosphorylates vimentin/VIM. Therefore may play a specific role in the dynamic behavior of the intermediate filament cytoskeleton. The sequence is that of Serine/threonine-protein kinase 33 (STK33) from Bos taurus (Bovine).